A 63-amino-acid polypeptide reads, in one-letter code: Bowman-Birk type proteinase inhibitor (63 aa).

Disulfide bonds link C8–C61, C9–C24, C12–C57, C14–C22, C31–C38, C35–C50, and C40–C48.

It belongs to the Bowman-Birk serine protease inhibitor family.

In terms of biological role, this inhibitor has two domains, each with separate antiprotease activity. Inhibits bovine trypsin and chymotrypsin, in a molar ratio of 1:1. The trypsin inhibition of FBI is independent of chymotrypsin inhibition, but the chymotrypsin inhibition is not completely independent of trypsin inhibition. This Vicia faba (Broad bean) protein is Bowman-Birk type proteinase inhibitor.